Reading from the N-terminus, the 171-residue chain is 3-hydroxydecanoyl-[acyl-carrier-protein] dehydratase (171 aa).

Histidine 70 is an active-site residue.

The protein belongs to the thioester dehydratase family. FabA subfamily. As to quaternary structure, homodimer.

The protein localises to the cytoplasm. It catalyses the reaction a (3R)-hydroxyacyl-[ACP] = a (2E)-enoyl-[ACP] + H2O. The catalysed reaction is (3R)-hydroxydecanoyl-[ACP] = (2E)-decenoyl-[ACP] + H2O. It carries out the reaction (2E)-decenoyl-[ACP] = (3Z)-decenoyl-[ACP]. It participates in lipid metabolism; fatty acid biosynthesis. In terms of biological role, necessary for the introduction of cis unsaturation into fatty acids. Catalyzes the dehydration of (3R)-3-hydroxydecanoyl-ACP to E-(2)-decenoyl-ACP and then its isomerization to Z-(3)-decenoyl-ACP. Can catalyze the dehydratase reaction for beta-hydroxyacyl-ACPs with saturated chain lengths up to 16:0, being most active on intermediate chain length. The protein is 3-hydroxydecanoyl-[acyl-carrier-protein] dehydratase of Colwellia psychrerythraea (strain 34H / ATCC BAA-681) (Vibrio psychroerythus).